We begin with the raw amino-acid sequence, 96 residues long: Acylphosphatase (96 aa).

The Acylphosphatase-like domain maps to 11 to 96 (ARRWYVRGRV…ITSYDSFRIR (86 aa)). Residues arginine 26 and asparagine 44 contribute to the active site.

Belongs to the acylphosphatase family.

It carries out the reaction an acyl phosphate + H2O = a carboxylate + phosphate + H(+). This is Acylphosphatase (acyP) from Solibacter usitatus (strain Ellin6076).